The following is a 236-amino-acid chain: WUSCHEL-related homeobox 4 (236 aa).

Residues 88–152 (AGTTRWNPSA…NHKARERQKQ (65 aa)) constitute a DNA-binding region (homeobox; WUS-type). The disordered stretch occupies residues 169–188 (PATANETKEAPEKKEKDVED). Positions 174–187 (ETKEAPEKKEKDVE) are enriched in basic and acidic residues.

It belongs to the WUS homeobox family.

It localises to the nucleus. Functionally, transcription factor which may be involved in developmental processes. This chain is WUSCHEL-related homeobox 4 (WOX4), found in Oryza sativa subsp. indica (Rice).